The sequence spans 62 residues: MKPDEIKALSADEAKQKLVELKAAYFNLRFRHETGQLDNTSMLEKTKKDIARVKTVLSAYNR.

This sequence belongs to the universal ribosomal protein uL29 family.

This is Large ribosomal subunit protein uL29 from Desulfosudis oleivorans (strain DSM 6200 / JCM 39069 / Hxd3) (Desulfococcus oleovorans).